We begin with the raw amino-acid sequence, 310 residues long: HPr kinase/phosphorylase (310 aa).

Catalysis depends on residues His138 and Lys159. An ATP-binding site is contributed by 153 to 160 (GASGIGKS). A Mg(2+)-binding site is contributed by Ser160. The Proton acceptor; for phosphorylation activity. Proton donor; for dephosphorylation activity role is filled by Asp177. The important for the catalytic mechanism of both phosphorylation and dephosphorylation stretch occupies residues 201–210 (IEIRGVGIID). Glu202 serves as a coordination point for Mg(2+). Residue Arg243 is part of the active site. Residues 264-269 (PVKTGR) are important for the catalytic mechanism of dephosphorylation.

The protein belongs to the HPrK/P family. As to quaternary structure, homohexamer. Mg(2+) is required as a cofactor.

The enzyme catalyses [HPr protein]-L-serine + ATP = [HPr protein]-O-phospho-L-serine + ADP + H(+). It carries out the reaction [HPr protein]-O-phospho-L-serine + phosphate + H(+) = [HPr protein]-L-serine + diphosphate. Functionally, catalyzes the ATP- as well as the pyrophosphate-dependent phosphorylation of a specific serine residue in HPr, a phosphocarrier protein of the phosphoenolpyruvate-dependent sugar phosphotransferase system (PTS). HprK/P also catalyzes the pyrophosphate-producing, inorganic phosphate-dependent dephosphorylation (phosphorolysis) of seryl-phosphorylated HPr (P-Ser-HPr). The two antagonistic activities of HprK/P are regulated by several intracellular metabolites, which change their concentration in response to the absence or presence of rapidly metabolisable carbon sources (glucose, fructose, etc.) in the growth medium. Therefore, by controlling the phosphorylation state of HPr, HPrK/P is a sensor enzyme that plays a major role in the regulation of carbon metabolism and sugar transport: it mediates carbon catabolite repression (CCR), and regulates PTS-catalyzed carbohydrate uptake and inducer exclusion. This Lactococcus lactis subsp. cremoris (strain SK11) protein is HPr kinase/phosphorylase.